Reading from the N-terminus, the 483-residue chain is uncharacterized protein (483 aa).

One copy of the WD repeat lies at 96 to 137 (IQCDQDPLSSISWSPSGELLLWSSFDSKITVWSLNTQKGYLL).

This is an uncharacterized protein from Schizosaccharomyces pombe (strain 972 / ATCC 24843) (Fission yeast).